The sequence spans 264 residues: Tetraspanin-12 (264 aa).

At 1 to 13 (MLRLSNAAVITTN) the chain is on the cytoplasmic side. The chain crosses the membrane as a helical span at residues 14–34 (AILALIGLAALSFSVYVYVQG). The Extracellular segment spans residues 35–45 (PSQCQRFVQNP). A helical membrane pass occupies residues 46–66 (LIVTAALLFFISSLGLIAALY). Residues 67–75 (GSHIIITLY) are Cytoplasmic-facing. Residues 76-96 (LFFLFLSILLLLVLSVFIFLV) traverse the membrane as a helical segment. At 97–228 (TNPTAGKALS…VLKGIRKRWR (132 aa)) the chain is on the extracellular side. N180 carries an N-linked (GlcNAc...) asparagine glycan. Residues 229–249 (ILIVVNLLLILLVVFLYSCGC) form a helical membrane-spanning segment. Topologically, residues 250–264 (CVRKNNRVPWKRRFF) are cytoplasmic.

The protein belongs to the tetraspanin (TM4SF) family.

The protein localises to the membrane. May be involved in the regulation of cell differentiation. The protein is Tetraspanin-12 (TET12) of Arabidopsis thaliana (Mouse-ear cress).